Here is a 498-residue protein sequence, read N- to C-terminus: Histone-lysine N-methyltransferase SET5 (498 aa).

The tract at residues 68–94 (KPNDGCTSRSTSCPGGKKKKKSKTDTS) is disordered. One can recognise an SET domain in the interval 108-415 (AGIRGVYFDP…PDDELVISYI (308 aa)).

Belongs to the class V-like SAM-binding methyltransferase superfamily. Histone-lysine methyltransferase family. SET5 subfamily.

Its subcellular location is the nucleus. It is found in the chromosome. The protein localises to the cytoplasm. The enzyme catalyses L-lysyl-[histone] + S-adenosyl-L-methionine = N(6)-methyl-L-lysyl-[histone] + S-adenosyl-L-homocysteine + H(+). In terms of biological role, histone methyltransferase that monomethylates 'Lys-5', 'Lys-8' and 'Lys-12' of histone H4 (H4K5me1, H4K8me1 and H4K12me1, respectively), thereby controlling gene expression and remodeling chromatin structures. This Mycosarcoma maydis (Corn smut fungus) protein is Histone-lysine N-methyltransferase SET5 (SET5).